We begin with the raw amino-acid sequence, 76 residues long: Translational regulator CsrA (76 aa).

This sequence belongs to the CsrA/RsmA family. As to quaternary structure, homodimer; the beta-strands of each monomer intercalate to form a hydrophobic core, while the alpha-helices form wings that extend away from the core.

It is found in the cytoplasm. Its function is as follows. A translational regulator that binds mRNA to regulate translation initiation and/or mRNA stability. Usually binds in the 5'-UTR at or near the Shine-Dalgarno sequence preventing ribosome-binding, thus repressing translation. Its main target seems to be the major flagellin gene, while its function is anatagonized by FliW. The sequence is that of Translational regulator CsrA from Helicobacter pylori (strain P12).